Consider the following 468-residue polypeptide: GTPase Der (468 aa).

EngA-type G domains are found at residues 3–169 (PVMA…SPPD) and 199–372 (IRLA…KAAT). GTP contacts are provided by residues 9 to 16 (GRANVGKS), 56 to 60 (DTGGF), 119 to 122 (NKAE), 205 to 212 (GRPNVGKS), 252 to 256 (DTAGL), and 317 to 320 (NKWD). Residues 373 to 457 (CKMSTPVLTR…PLRIELKTSH (85 aa)) form the KH-like domain.

The protein belongs to the TRAFAC class TrmE-Era-EngA-EngB-Septin-like GTPase superfamily. EngA (Der) GTPase family. In terms of assembly, associates with the 50S ribosomal subunit.

GTPase that plays an essential role in the late steps of ribosome biogenesis. The polypeptide is GTPase Der (Verminephrobacter eiseniae (strain EF01-2)).